The sequence spans 151 residues: UPF0735 ACT domain-containing protein SH1278 (151 aa).

The ACT domain maps to threonine 74–methionine 149.

The protein belongs to the UPF0735 family.

This Staphylococcus haemolyticus (strain JCSC1435) protein is UPF0735 ACT domain-containing protein SH1278.